Here is a 179-residue protein sequence, read N- to C-terminus: Large ribosomal subunit protein uL5 (179 aa).

It belongs to the universal ribosomal protein uL5 family. In terms of assembly, part of the 50S ribosomal subunit; part of the 5S rRNA/L5/L18/L25 subcomplex. Contacts the 5S rRNA and the P site tRNA. Forms a bridge to the 30S subunit in the 70S ribosome.

This is one of the proteins that bind and probably mediate the attachment of the 5S RNA into the large ribosomal subunit, where it forms part of the central protuberance. In the 70S ribosome it contacts protein S13 of the 30S subunit (bridge B1b), connecting the 2 subunits; this bridge is implicated in subunit movement. Contacts the P site tRNA; the 5S rRNA and some of its associated proteins might help stabilize positioning of ribosome-bound tRNAs. The chain is Large ribosomal subunit protein uL5 from Haemophilus influenzae (strain 86-028NP).